We begin with the raw amino-acid sequence, 521 residues long: MRLEVFCQDRIGLARELLDLLVARSIDLRGIEVAASGRIYLNFSTLEFEQFSNLMAEIRRTPGVTDVRTVPYMPSEREHRVLSALLVAMPEPVFSVDLRTKVELANPAAQNLFNLDENKIRNFTADHLINGFNFARWLESERVQAQAQHVVIEGRDFLMEAHPIYLSEDNDQADQLVGAMVMLKSTARMGRQLQNLVVTDETEFDHIVAVTPRMRQVVEQARKLAMHDAPLLIIGDTGTGKDMLARACHLRSARGKMPFLALNCASLPDDVAESELFGHAAGAYPNALEGKKGFFEQANGGSVLLDEIGEMSPTMQTKLLRFLNDGTFRRVGEEHEVHVNVRVICATQKNLFELVQRGEFREDLFYRLNVLTLNLPPLRERVQDIMPLTEIFVARFADEQGIPRPRLSSQLNAFLMRYNWPGNVRQLKNALYRALTQLEGHELRPQDIVLPEQALDVSLGEEAMEGTLDQITSRFERSILTRLYLSYPSTRKLAKRLGVSHTAIANKLREYGLGQKRGDNE.

In terms of domain architecture, ACT spans 2-72; the sequence is RLEVFCQDRI…GVTDVRTVPY (71 aa). In terms of domain architecture, PAS spans 78-120; sequence EHRVLSALLVAMPEPVFSVDLRTKVELANPAAQNLFNLDENKI. Residues 207 to 436 enclose the Sigma-54 factor interaction domain; that stretch reads IVAVTPRMRQ…LKNALYRALT (230 aa). Residues 235 to 242 and 298 to 307 each bind ATP; these read GDTGTGKD and ANGGSVLLDE. Residues 489-509 constitute a DNA-binding region (H-T-H motif); that stretch reads STRKLAKRLGVSHTAIANKLR.

Homodimer. In presence of tyrosine (or high concentrations of phenylalanine or tryptophan) and ATP, it self-associates to form an hexamer.

It is found in the cytoplasm. Functionally, dual transcriptional regulator of the TyrR regulon, which includes a number of genes coding for proteins involved in the biosynthesis or transport of the three aromatic amino acids, phenylalanine, tyrosine and tryptophan. These three aromatic amino acids act as effectors which bind to the TyrR protein to form an active regulatory protein. Acts by binding specifically to TyrR boxes in the promoter region of the target genes. The chain is HTH-type transcriptional regulatory protein TyrR from Enterobacter agglomerans (Erwinia herbicola).